The chain runs to 331 residues: Methionyl-tRNA formyltransferase (331 aa).

111–114 serves as a coordination point for (6S)-5,6,7,8-tetrahydrofolate; the sequence is SLLP.

The protein belongs to the Fmt family.

The catalysed reaction is L-methionyl-tRNA(fMet) + (6R)-10-formyltetrahydrofolate = N-formyl-L-methionyl-tRNA(fMet) + (6S)-5,6,7,8-tetrahydrofolate + H(+). Its function is as follows. Attaches a formyl group to the free amino group of methionyl-tRNA(fMet). The formyl group appears to play a dual role in the initiator identity of N-formylmethionyl-tRNA by promoting its recognition by IF2 and preventing the misappropriation of this tRNA by the elongation apparatus. The sequence is that of Methionyl-tRNA formyltransferase from Thermosynechococcus vestitus (strain NIES-2133 / IAM M-273 / BP-1).